The following is a 488-amino-acid chain: (Z)-2-((N-methylformamido)methylene)-5-hydroxybutyrolactone dehydrogenase (488 aa).

NAD(+)-binding positions include 149–150 and 226–227; these read WN and GG. Glu248 acts as the Proton acceptor in catalysis. Leu249 is an NAD(+) binding site. Cys282 serves as the catalytic Nucleophile. Residue Glu380 coordinates NAD(+).

This sequence belongs to the aldehyde dehydrogenase family. As to quaternary structure, homodimer.

The catalysed reaction is (Z)-2-((N-methylformamido)methylene)-5-hydroxybutanolactone + NAD(+) + H2O = (E)-2-((N-methylformamido) methylene)succinate + NADH + 3 H(+). Its function is as follows. Involved in the degradation of the pyridine ring of trigonelline (TG; N-methylnicotinate) into succinate and methylamine as carbon and nitrogen sources, respectively. Catalyzes the NAD(+)-dependent oxidation of (Z)-2-((N-methylformamido)methylene)-5-hydroxybutyrolactone (MFMB) to yield (E)-2-((N-methylformamido)methylene)succinate (MFMS). This is (Z)-2-((N-methylformamido)methylene)-5-hydroxybutyrolactone dehydrogenase from Acinetobacter baylyi (strain ATCC 33305 / BD413 / ADP1).